We begin with the raw amino-acid sequence, 100 residues long: Aspartyl/glutamyl-tRNA(Asn/Gln) amidotransferase subunit C (100 aa).

The protein belongs to the GatC family. As to quaternary structure, heterotrimer of A, B and C subunits.

The catalysed reaction is L-glutamyl-tRNA(Gln) + L-glutamine + ATP + H2O = L-glutaminyl-tRNA(Gln) + L-glutamate + ADP + phosphate + H(+). The enzyme catalyses L-aspartyl-tRNA(Asn) + L-glutamine + ATP + H2O = L-asparaginyl-tRNA(Asn) + L-glutamate + ADP + phosphate + 2 H(+). In terms of biological role, allows the formation of correctly charged Asn-tRNA(Asn) or Gln-tRNA(Gln) through the transamidation of misacylated Asp-tRNA(Asn) or Glu-tRNA(Gln) in organisms which lack either or both of asparaginyl-tRNA or glutaminyl-tRNA synthetases. The reaction takes place in the presence of glutamine and ATP through an activated phospho-Asp-tRNA(Asn) or phospho-Glu-tRNA(Gln). This chain is Aspartyl/glutamyl-tRNA(Asn/Gln) amidotransferase subunit C, found in Streptococcus gordonii (strain Challis / ATCC 35105 / BCRC 15272 / CH1 / DL1 / V288).